The primary structure comprises 511 residues: Bifunctional purine biosynthesis protein PurH (511 aa).

The MGS-like domain occupies 1–145 (MKKRALVSVS…KNHKFVSVIV (145 aa)).

The protein belongs to the PurH family.

The enzyme catalyses (6R)-10-formyltetrahydrofolate + 5-amino-1-(5-phospho-beta-D-ribosyl)imidazole-4-carboxamide = 5-formamido-1-(5-phospho-D-ribosyl)imidazole-4-carboxamide + (6S)-5,6,7,8-tetrahydrofolate. It carries out the reaction IMP + H2O = 5-formamido-1-(5-phospho-D-ribosyl)imidazole-4-carboxamide. It participates in purine metabolism; IMP biosynthesis via de novo pathway; 5-formamido-1-(5-phospho-D-ribosyl)imidazole-4-carboxamide from 5-amino-1-(5-phospho-D-ribosyl)imidazole-4-carboxamide (10-formyl THF route): step 1/1. Its pathway is purine metabolism; IMP biosynthesis via de novo pathway; IMP from 5-formamido-1-(5-phospho-D-ribosyl)imidazole-4-carboxamide: step 1/1. This Bacillus cereus (strain B4264) protein is Bifunctional purine biosynthesis protein PurH.